The chain runs to 308 residues: Ribosomal RNA small subunit methyltransferase H (308 aa).

S-adenosyl-L-methionine contacts are provided by residues 36 to 38, Asp55, Phe82, Asp103, and Gln110; that span reads GGH.

The protein belongs to the methyltransferase superfamily. RsmH family.

It is found in the cytoplasm. It carries out the reaction cytidine(1402) in 16S rRNA + S-adenosyl-L-methionine = N(4)-methylcytidine(1402) in 16S rRNA + S-adenosyl-L-homocysteine + H(+). Specifically methylates the N4 position of cytidine in position 1402 (C1402) of 16S rRNA. In Helicobacter pylori (strain ATCC 700392 / 26695) (Campylobacter pylori), this protein is Ribosomal RNA small subunit methyltransferase H.